Reading from the N-terminus, the 250-residue chain is Probable dihydroorotate dehydrogenase B (NAD(+)), electron transfer subunit (250 aa).

Residues 1–89 (MNRITVDQVR…RGPYGNGFQI (89 aa)) enclose the FAD-binding FR-type domain. Cys-200, Cys-205, Cys-208, and Cys-216 together coordinate [2Fe-2S] cluster.

Belongs to the PyrK family. As to quaternary structure, heterotetramer of 2 PyrK and 2 PyrD type B subunits. [2Fe-2S] cluster serves as cofactor. The cofactor is FAD.

Its pathway is pyrimidine metabolism; UMP biosynthesis via de novo pathway; orotate from (S)-dihydroorotate (NAD(+) route): step 1/1. In terms of biological role, responsible for channeling the electrons from the oxidation of dihydroorotate from the FMN redox center in the PyrD type B subunit to the ultimate electron acceptor NAD(+). This is Probable dihydroorotate dehydrogenase B (NAD(+)), electron transfer subunit from Thermoplasma acidophilum (strain ATCC 25905 / DSM 1728 / JCM 9062 / NBRC 15155 / AMRC-C165).